We begin with the raw amino-acid sequence, 264 residues long: Acyl-[acyl-carrier-protein]--UDP-N-acetylglucosamine O-acyltransferase (264 aa).

Belongs to the transferase hexapeptide repeat family. LpxA subfamily. Homotrimer.

It is found in the cytoplasm. It carries out the reaction a (3R)-hydroxyacyl-[ACP] + UDP-N-acetyl-alpha-D-glucosamine = a UDP-3-O-[(3R)-3-hydroxyacyl]-N-acetyl-alpha-D-glucosamine + holo-[ACP]. The protein operates within glycolipid biosynthesis; lipid IV(A) biosynthesis; lipid IV(A) from (3R)-3-hydroxytetradecanoyl-[acyl-carrier-protein] and UDP-N-acetyl-alpha-D-glucosamine: step 1/6. Involved in the biosynthesis of lipid A, a phosphorylated glycolipid that anchors the lipopolysaccharide to the outer membrane of the cell. This Chlorobaculum tepidum (strain ATCC 49652 / DSM 12025 / NBRC 103806 / TLS) (Chlorobium tepidum) protein is Acyl-[acyl-carrier-protein]--UDP-N-acetylglucosamine O-acyltransferase.